The primary structure comprises 215 residues: Nascent polypeptide-associated complex subunit alpha-2 (215 aa).

The disordered stretch occupies residues 1 to 51 (MPGEATETVPATEQELPQSQAETGSGTASDSGESVPGIEEQDSTQTTTQKA). A compositionally biased stretch (polar residues) spans 9-32 (VPATEQELPQSQAETGSGTASDSG). Phosphoserine is present on residues Ser43 and Ser132. The region spanning 70–135 (SRSEKRARKA…AKIQDLSQQA (66 aa)) is the NAC-A/B domain. Lys142 bears the N6-acetyllysine; alternate mark. A Glycyl lysine isopeptide (Lys-Gly) (interchain with G-Cter in SUMO2); alternate cross-link involves residue Lys142. Thr161 is subject to Phosphothreonine. A phosphoserine mark is found at Ser166, Ser186, Ser191, and Ser203. The UBA domain maps to 176–213 (VEVKDVKLVMSQANVSRAKAVRALKNNSNDIVNAIMEL). Phosphothreonine is present on Thr214.

Belongs to the NAC-alpha family. Part of the nascent polypeptide-associated complex (NAC), consisting of NACA and BTF3. NAC associates with ribosomes through the BTF3 subunit. Both subunits can contact nascent polypeptide chains. In terms of tissue distribution, expressed specifically in testis and skeletal muscle.

It localises to the cytoplasm. It is found in the nucleus. Prevents inappropriate targeting of non-secretory polypeptides to the endoplasmic reticulum (ER). Binds to nascent polypeptide chains as they emerge from the ribosome and blocks their interaction with the signal recognition particle (SRP), which normally targets nascent secretory peptides to the ER. Also reduces the inherent affinity of ribosomes for protein translocation sites in the ER membrane (M sites). This chain is Nascent polypeptide-associated complex subunit alpha-2 (NACA2), found in Homo sapiens (Human).